A 161-amino-acid polypeptide reads, in one-letter code: 2-C-methyl-D-erythritol 2,4-cyclodiphosphate synthase (161 aa).

2 residues coordinate a divalent metal cation: Asp-9 and His-11. Residues 9-11 (DFH) and 37-38 (HS) each bind 4-CDP-2-C-methyl-D-erythritol 2-phosphate. Residue His-45 coordinates a divalent metal cation. Residues 59-61 (DIG), 64-68 (FPDTD), 135-138 (TTTE), and Arg-145 contribute to the 4-CDP-2-C-methyl-D-erythritol 2-phosphate site.

It belongs to the IspF family. In terms of assembly, homotrimer. A divalent metal cation serves as cofactor.

The enzyme catalyses 4-CDP-2-C-methyl-D-erythritol 2-phosphate = 2-C-methyl-D-erythritol 2,4-cyclic diphosphate + CMP. Its pathway is isoprenoid biosynthesis; isopentenyl diphosphate biosynthesis via DXP pathway; isopentenyl diphosphate from 1-deoxy-D-xylulose 5-phosphate: step 4/6. Its function is as follows. Involved in the biosynthesis of isopentenyl diphosphate (IPP) and dimethylallyl diphosphate (DMAPP), two major building blocks of isoprenoid compounds. Catalyzes the conversion of 4-diphosphocytidyl-2-C-methyl-D-erythritol 2-phosphate (CDP-ME2P) to 2-C-methyl-D-erythritol 2,4-cyclodiphosphate (ME-CPP) with a corresponding release of cytidine 5-monophosphate (CMP). The protein is 2-C-methyl-D-erythritol 2,4-cyclodiphosphate synthase of Leptospira borgpetersenii serovar Hardjo-bovis (strain JB197).